Here is a 60-residue protein sequence, read N- to C-terminus: Large ribosomal subunit protein bL33 (60 aa).

This sequence belongs to the bacterial ribosomal protein bL33 family.

This chain is Large ribosomal subunit protein bL33, found in Pelodictyon phaeoclathratiforme (strain DSM 5477 / BU-1).